Here is a 452-residue protein sequence, read N- to C-terminus: Eukaryotic translation initiation factor 3 subunit E (452 aa).

The span at 1-17 (MADNTPTTANDLLNDAT) shows a compositional bias: polar residues. A disordered region spans residues 1–23 (MADNTPTTANDLLNDATQAAAKS). The PCI domain occupies 246-426 (PFFNHEPARD…GTVVMNHPPS (181 aa)).

It belongs to the eIF-3 subunit E family. As to quaternary structure, component of the eukaryotic translation initiation factor 3 (eIF-3) complex.

It is found in the cytoplasm. In terms of biological role, component of the eukaryotic translation initiation factor 3 (eIF-3) complex, which is involved in protein synthesis of a specialized repertoire of mRNAs and, together with other initiation factors, stimulates binding of mRNA and methionyl-tRNAi to the 40S ribosome. The eIF-3 complex specifically targets and initiates translation of a subset of mRNAs involved in cell proliferation. The polypeptide is Eukaryotic translation initiation factor 3 subunit E (int6) (Botryotinia fuckeliana (strain B05.10) (Noble rot fungus)).